The sequence spans 366 residues: Leucine dehydrogenase (366 aa).

K80 is a catalytic residue. 180 to 186 (GVGHVAY) is an NAD(+) binding site.

The protein belongs to the Glu/Leu/Phe/Val dehydrogenases family. Homooctamer.

It carries out the reaction L-leucine + NAD(+) + H2O = 4-methyl-2-oxopentanoate + NH4(+) + NADH + H(+). It functions in the pathway amino-acid degradation; L-leucine degradation; 4-methyl-2-oxopentanoate from L-leucine (dehydrogenase route): step 1/1. Inhibited by pyridoxal phosphate. Functionally, catalyzes the reversible deamination of L-leucine to 4-methyl-2-oxopentanoate. Exhibits the highest activity with L-leucine as substrate, but can also use other L-amino acids such as L-isoleucine, L-valine and L-2-aminovaleric acid. All of the oxo analogs of the amino acid substrates serve as good substrates for the reverse reaction. This is Leucine dehydrogenase (ldh) from Thermoactinomyces intermedius.